The chain runs to 31 residues: Cytochrome b6-f complex subunit 6 (31 aa).

A helical transmembrane segment spans residues 4 to 24 (LLSYFGLLLAALISTLVLFIG).

It belongs to the PetL family. As to quaternary structure, the 4 large subunits of the cytochrome b6-f complex are cytochrome b6, subunit IV (17 kDa polypeptide, PetD), cytochrome f and the Rieske protein, while the 4 small subunits are PetG, PetL, PetM and PetN. The complex functions as a dimer.

Its subcellular location is the plastid. The protein resides in the chloroplast thylakoid membrane. Functionally, component of the cytochrome b6-f complex, which mediates electron transfer between photosystem II (PSII) and photosystem I (PSI), cyclic electron flow around PSI, and state transitions. PetL is important for photoautotrophic growth as well as for electron transfer efficiency and stability of the cytochrome b6-f complex. The polypeptide is Cytochrome b6-f complex subunit 6 (Psilotum nudum (Whisk fern)).